The sequence spans 235 residues: MVLIPAIDIMEEKCVRLTKGDFNTKEVYYENPVDVAKMWEELGAKRIHVVDLDGAKQGHLVNGNIIEQIIKSCKAEIEVGGGIRNRETIDYLFSVGVKYVILGSAAIYDKDLLLYSLSNYGERTIVGIDSKNGEVAVSGWLEKTKIKDMELAKKMKEIGVKTIIFTDISKDGTLNGPNFKALENILKTGVQVIASGGISSIEDLKKLKEMGAYGAIIGKALYIGKINFKSALEVI.

The active-site Proton acceptor is aspartate 8. The active-site Proton donor is aspartate 129.

The protein belongs to the HisA/HisF family.

The protein resides in the cytoplasm. The catalysed reaction is 1-(5-phospho-beta-D-ribosyl)-5-[(5-phospho-beta-D-ribosylamino)methylideneamino]imidazole-4-carboxamide = 5-[(5-phospho-1-deoxy-D-ribulos-1-ylimino)methylamino]-1-(5-phospho-beta-D-ribosyl)imidazole-4-carboxamide. It functions in the pathway amino-acid biosynthesis; L-histidine biosynthesis; L-histidine from 5-phospho-alpha-D-ribose 1-diphosphate: step 4/9. The chain is 1-(5-phosphoribosyl)-5-[(5-phosphoribosylamino)methylideneamino] imidazole-4-carboxamide isomerase from Thermoanaerobacter sp. (strain X514).